The chain runs to 296 residues: MQRLDPWHGTCNLQFVAGSSGSQFQGGCTAPLKLMRAERGENGRCELPLLHTAGGLVGGDQLSINLGLRPNSRCLLTSVAAQKIYGSIGRSQLHPLGTWARQQVSAELDADSDLEWLPQELVLYADALFEQNLSVTLPMDGSFLSAEIVRLGRTAANETLGQGCWRSDVQIQRQTSEGRRWELVDRLEISDDALKGFHGLNQQPVFGTLVWAAPFPLQTTKINNLLDDIRQDRKALEGQMHCGALPQGLIARYSGFSSRDARFWFSRIWARTRQARNLASPKIPRVWPLQEYPLRP.

The protein belongs to the UreD family. As to quaternary structure, ureD, UreF and UreG form a complex that acts as a GTP-hydrolysis-dependent molecular chaperone, activating the urease apoprotein by helping to assemble the nickel containing metallocenter of UreC. The UreE protein probably delivers the nickel.

It localises to the cytoplasm. Functionally, required for maturation of urease via the functional incorporation of the urease nickel metallocenter. The sequence is that of Urease accessory protein UreD from Synechococcus sp. (strain CC9311).